Consider the following 355-residue polypeptide: UDP-galactose translocator 1 (355 aa).

The segment at 1–36 is disordered; that stretch reads MKFQNVHISHQDEDKEKLLPNDKDVEKADESPSSSR. The span at 9 to 30 shows a compositional bias: basic and acidic residues; that stretch reads SHQDEDKEKLLPNDKDVEKADE. 6 helical membrane-spanning segments follow: residues 40-60, 177-197, 211-231, 282-302, 309-329, and 330-350; these read VFKC…TLTI, WMAI…NVSA, IVGL…GVYF, VWAV…VMRY, SMAS…IFPD, and IFIG…VLLY.

Belongs to the nucleotide-sugar transporter family. SLC35A subfamily.

The protein localises to the membrane. It localises to the cytoplasmic granule membrane. The protein is UDP-galactose translocator 1 (ugtp-1) of Caenorhabditis elegans.